Here is a 194-residue protein sequence, read N- to C-terminus: GTP cyclohydrolase-2 (194 aa).

GTP is bound at residue 47–51 (RVHSE). Cys52, Cys63, and Cys65 together coordinate Zn(2+). Residues Gln68, 90–92 (EGR), and Thr112 contribute to the GTP site. Catalysis depends on Asp124, which acts as the Proton acceptor. The Nucleophile role is filled by Arg126. GTP is bound by residues Thr147 and Lys152.

This sequence belongs to the GTP cyclohydrolase II family. Homodimer. Requires Zn(2+) as cofactor.

It carries out the reaction GTP + 4 H2O = 2,5-diamino-6-hydroxy-4-(5-phosphoribosylamino)-pyrimidine + formate + 2 phosphate + 3 H(+). It participates in cofactor biosynthesis; riboflavin biosynthesis; 5-amino-6-(D-ribitylamino)uracil from GTP: step 1/4. Catalyzes the conversion of GTP to 2,5-diamino-6-ribosylamino-4(3H)-pyrimidinone 5'-phosphate (DARP), formate and pyrophosphate. The protein is GTP cyclohydrolase-2 of Buchnera aphidicola subsp. Acyrthosiphon pisum (strain APS) (Acyrthosiphon pisum symbiotic bacterium).